Here is a 177-residue protein sequence, read N- to C-terminus: Large ribosomal subunit protein uL6 (177 aa).

This sequence belongs to the universal ribosomal protein uL6 family. As to quaternary structure, part of the 50S ribosomal subunit.

Its function is as follows. This protein binds to the 23S rRNA, and is important in its secondary structure. It is located near the subunit interface in the base of the L7/L12 stalk, and near the tRNA binding site of the peptidyltransferase center. The polypeptide is Large ribosomal subunit protein uL6 (Methylobacterium nodulans (strain LMG 21967 / CNCM I-2342 / ORS 2060)).